We begin with the raw amino-acid sequence, 445 residues long: Fatty acid desaturase 3 (445 aa).

Positions 1–21 are disordered; that stretch reads MGGVGEPGPREGPAQPGAPLP. Residues 1–133 lie on the Cytoplasmic side of the membrane; it reads MGGVGEPGPR…DMKLFDASPT (133 aa). The Cytochrome b5 heme-binding domain maps to 20 to 97; that stretch reads LPTFCWEQIR…LQPLLIGELA (78 aa). Residues 134–154 form a helical membrane-spanning segment; sequence FFAFLLGHILAMEVLAWLLIY. Topologically, residues 155–159 are lumenal; sequence LLGPG. A helical transmembrane segment spans residues 160-180; that stretch reads WVPSALAAFILAISQAQSWCL. The Cytoplasmic portion of the chain corresponds to 181-263; sequence QHDLGHASIF…KRRYLPYNQQ (83 aa). Positions 182–186 match the Histidine box-1 motif; that stretch reads HDLGH. Positions 219-223 match the Histidine box-2 motif; it reads HFQHH. A helical membrane pass occupies residues 264 to 284; sequence HLYFFLIGPPLLTLVNFEVEN. The Lumenal segment spans residues 285–306; sequence LAYMLVCMQWADLLWAASFYAR. A helical membrane pass occupies residues 307–327; that stretch reads FFLSYLPFYGVPGVLLFFVAV. Residues 328-445 are Cytoplasmic-facing; it reads RVLESHWFVW…DIWLDAYLHQ (118 aa). The Histidine box-3 signature appears at 383–387; the sequence is QIEHH.

This sequence belongs to the fatty acid desaturase type 1 family. In terms of tissue distribution, highly expressed in various organs and tissues including liver, kidney, brain, lung, pancreas, testis, ovary and skeletal muscle (at protein level).

Its subcellular location is the endoplasmic reticulum membrane. The enzyme catalyses an N-acylsphing-4-enine + 2 Fe(II)-[cytochrome b5] + O2 + 2 H(+) = an N-acyl-sphinga-4E,14Z-dienine + 2 Fe(III)-[cytochrome b5] + 2 H2O. It catalyses the reaction N-(hexanoyl)sphing-4-enine + 2 Fe(II)-[cytochrome b5] + O2 + 2 H(+) = N-hexanoyl-sphinga-4E,14Z-dienine + 2 Fe(III)-[cytochrome b5] + 2 H2O. It carries out the reaction sphing-4-enine + 2 Fe(II)-[cytochrome b5] + O2 + 2 H(+) = sphinga-4E,14Z-dienine + 2 Fe(III)-[cytochrome b5] + 2 H2O. The catalysed reaction is (11E)-octadecenoyl-CoA + 2 Fe(II)-[cytochrome b5] + O2 + 2 H(+) = (11E,13Z)-octadecadienoyl-CoA + 2 Fe(III)-[cytochrome b5] + 2 H2O. The enzyme catalyses N-acyl-1-deoxysphinganine + 2 Fe(II)-[cytochrome b5] + O2 + 2 H(+) = N-acyl-1-deoxysphing-14Z-enine + 2 Fe(III)-[cytochrome b5] + 2 H2O. It catalyses the reaction an N-acylsphinganine + 2 Fe(II)-[cytochrome b5] + O2 + 2 H(+) = an N-acylsphing-14Z-enine + 2 Fe(III)-[cytochrome b5] + 2 H2O. The protein operates within lipid metabolism; sphingolipid metabolism. It functions in the pathway lipid metabolism; polyunsaturated fatty acid biosynthesis. In terms of biological role, mammals have different sphingoid bases that differ in their length and/or pattern of desaturation and hydroxyl groups. The predominant sphingoid base that comprises mammalian ceramides is sphing-4-enine (sphingosine or SPH) which has a trans (E) desaturation at carbon 4. FADS3 is a desaturase that introduces a cis (Z) double bond between carbon 14 and carbon 15 of the sphingoid base (also known as long chain base, LCB), producing LCBs such as sphinga-4,14-dienine (SPD, d18:2(4E,14Z)) from SPH. Prefers SPH-containing ceramides (N-acylsphing-4-enines) as substrates. Capable of metabolizing also the SPH in its free form. SPD ceramides occur widely in mammalian tissues and cells. Due to their unusual structure containing a cis double bond, SPD ceramides may have an opposite, negative role in lipid microdomain formation relative to conventional ceramides. Could be involved in the detoxification of 1-deoxy sphingolipids, by desaturating the cytotoxic 1-deoxysphinganine (1-deoxySA, m18:0), produced under pathological conditions, to 1-deoxysphingenine (1-deoxysphingosine, 1-deoxySO, m18:1). Although prefers SPH-containing ceramides (N-acylsphing-4-enines) as substrates, it also exhibits activity toward dihydrosphingosine-containing CERs (N-acylsphinganines) and produces 14Z-SPH-containing sphingolipids,which can be found in patients with DEGS1 mutations. Its desaturase mechanism involves an electron transfer facilitated by cytochrome b5. FADS3 also acts as a methyl-end fatty acyl coenzyme A (CoA) desaturase that introduces a cis double bond between the preexisting double bond and the terminal methyl group of the fatty acyl chain. Desaturates (11E)-octadecenoate (trans-vaccenoate, the predominant trans fatty acid in human milk) at carbon 13 to generate (11E,13Z)-octadecadienoate (also known as conjugated linoleic acid 11E,13Z-CLA). The polypeptide is Fatty acid desaturase 3 (Homo sapiens (Human)).